A 426-amino-acid polypeptide reads, in one-letter code: MDDSFDIYEIKARQVLDSRGNPTVEAEVLTAGGGYGHTIVPSGASTGTFEAVELRDATEKYGGKSVLNAVSNVNDIIAQELIGEDARNQRLIDQIMLNLDGTENKGNLGANAILAVSLAVAKAAADTASLPLYKYIGGCNAYVMPAPMMNVLNGGQHAGNALDFQEFMIMPVGADSFAEAVRMCAETYQSLKKVVAEKYGKDAVNIGDEGGFAPPVKTIDEALALLLEGVKRAGYEDEIVFTLDSAASEFYDEKSGSYIVAGEKVSTDKLIDIYKEMVAQYPIVSIEDPLFEEDFEGFKIATQELKGIQIVGDDLFVTNTKRLKKGIEMGAANSLLLKVNQIGTLSESIDAANMAFRNGYSLVVSHRSGESEDSTIADLAVALNAGQIKTGAPARGERTAKYNQLIRIEEELQISKYAGKDFKVPF.

Gln-165 contributes to the (2R)-2-phosphoglycerate binding site. The active-site Proton donor is Glu-209. Mg(2+) is bound by residues Asp-244, Glu-287, and Asp-313. Residues Lys-338, Arg-367, Ser-368, and Lys-389 each coordinate (2R)-2-phosphoglycerate. Residue Lys-338 is the Proton acceptor of the active site.

Belongs to the enolase family. It depends on Mg(2+) as a cofactor.

Its subcellular location is the cytoplasm. The protein localises to the secreted. It localises to the cell surface. The enzyme catalyses (2R)-2-phosphoglycerate = phosphoenolpyruvate + H2O. Its pathway is carbohydrate degradation; glycolysis; pyruvate from D-glyceraldehyde 3-phosphate: step 4/5. Catalyzes the reversible conversion of 2-phosphoglycerate (2-PG) into phosphoenolpyruvate (PEP). It is essential for the degradation of carbohydrates via glycolysis. This chain is Enolase, found in Methanococcus maripaludis (strain C7 / ATCC BAA-1331).